Here is a 29-residue protein sequence, read N- to C-terminus: Dander allergen Equ c 2.0101 (29 aa).

This sequence belongs to the calycin superfamily. Lipocalin family.

The protein resides in the secreted. This is Dander allergen Equ c 2.0101 from Equus caballus (Horse).